The sequence spans 629 residues: tRNA uridine 5-carboxymethylaminomethyl modification enzyme MnmG (629 aa).

13 to 18 (GGGHAG) provides a ligand contact to FAD. An NAD(+)-binding site is contributed by 273–287 (GPRYCPSIEDKVNRF).

This sequence belongs to the MnmG family. In terms of assembly, homodimer. Heterotetramer of two MnmE and two MnmG subunits. The cofactor is FAD.

It is found in the cytoplasm. Functionally, NAD-binding protein involved in the addition of a carboxymethylaminomethyl (cmnm) group at the wobble position (U34) of certain tRNAs, forming tRNA-cmnm(5)s(2)U34. The polypeptide is tRNA uridine 5-carboxymethylaminomethyl modification enzyme MnmG (Hahella chejuensis (strain KCTC 2396)).